The primary structure comprises 302 residues: MNVSVVTERRTPAYSSLAAGELNGLVARALLTEARLTPKPGLVDIRNSGAHRDMDLAAFERSTTAIAPWMEKFFIMGNNTAALAAENVLVMLRPLGMACENDMLQATNGVNTHRRAIFAFGLLSAAIGRLLARGEPLEQNRICDQVARLSRNIVAHELSAKKAGKLTKSETHFQCYGLSGARGEAESGFRTVRTQALPVFNRVVQEHDDTHLALLQTLLHLMAWNDDTNLVSRGGLEGLYYVQQQAQKLLWQGGVLVEGGIEAMQSLDDELILRNLSPGGSADLLAVTWFLSHFPAGSLYPE.

This sequence belongs to the CitG/MdcB family.

The catalysed reaction is 3'-dephospho-CoA + ATP = 2'-(5''-triphospho-alpha-D-ribosyl)-3'-dephospho-CoA + adenine. The sequence is that of Probable 2-(5''-triphosphoribosyl)-3'-dephosphocoenzyme-A synthase 1 from Salmonella paratyphi A (strain ATCC 9150 / SARB42).